A 274-amino-acid polypeptide reads, in one-letter code: Large ribosomal subunit protein uL2 (274 aa).

The tract at residues 221 to 274 (RGTAMNPVDHPHGGGEGKNFGKHPVTPWGVQTKGKKTRSNKRTDKFIVRRRSKK) is disordered.

This sequence belongs to the universal ribosomal protein uL2 family. As to quaternary structure, part of the 50S ribosomal subunit. Forms a bridge to the 30S subunit in the 70S ribosome.

One of the primary rRNA binding proteins. Required for association of the 30S and 50S subunits to form the 70S ribosome, for tRNA binding and peptide bond formation. It has been suggested to have peptidyltransferase activity; this is somewhat controversial. Makes several contacts with the 16S rRNA in the 70S ribosome. This is Large ribosomal subunit protein uL2 from Serratia proteamaculans (strain 568).